The chain runs to 410 residues: Histidine--tRNA ligase (410 aa).

The protein belongs to the class-II aminoacyl-tRNA synthetase family. In terms of assembly, homodimer.

Its subcellular location is the cytoplasm. It catalyses the reaction tRNA(His) + L-histidine + ATP = L-histidyl-tRNA(His) + AMP + diphosphate + H(+). In Elusimicrobium minutum (strain Pei191), this protein is Histidine--tRNA ligase.